The primary structure comprises 338 residues: Ankyrin-repeat domain containing transcription coregulator asaA (338 aa).

A compositionally biased stretch (basic and acidic residues) spans 1–10; sequence MGAPHEEIQA. 2 disordered regions span residues 1-70 and 112-137; these read MGAP…LRST and ASSV…PFID. Residues 11–33 show a composition bias toward basic residues; the sequence is LKRRREQNRLAQRRRRDNVRRRL. Residues 42–70 show a composition bias toward polar residues; it reads SPASASQTSLCSSTDSRVTLNPHQSLRST. A compositionally biased stretch (low complexity) spans 112-130; the sequence is ASSVSPSSSAGPLSSSPSP. ANK repeat units follow at residues 235–264, 268–297, and 301–330; these read RWTT…DPNA, EGAT…DPTL, and AGWL…PVDY.

The protein operates within secondary metabolite biosynthesis. Its function is as follows. Transcription coregulator involved in regulation of gene cluster that mediates the biosynthesis of aspergillic acid, a hydroxamic acid-containing pyrazinone with aliphatic side chains that originates from leucine (Leu) and isoleucine (Ile). Aspergillic acid has antibiotic properties and was shown to be lethal to mice. The chain is Ankyrin-repeat domain containing transcription coregulator asaA from Aspergillus flavus (strain ATCC 200026 / FGSC A1120 / IAM 13836 / NRRL 3357 / JCM 12722 / SRRC 167).